Reading from the N-terminus, the 2283-residue chain is AT-rich interactive domain-containing protein 1A (2283 aa).

Residues 1 to 10 (MAAQVAPAAA) are compositionally biased toward low complexity. Disordered stretches follow at residues 1 to 333 (MAAQ…PADM), 346 to 822 (AAAA…LPNA), and 979 to 1006 (ATKM…TTTN). N-acetylalanine is present on Ala2. Over residues 22 to 34 (ELKKAEQQQREEA) the composition is skewed to basic and acidic residues. Phosphoserine is present on residues Ser56 and Ser77. Residues 77–93 (SNGGGGGGGAGSGGGPG) show a composition bias toward gly residues. Composition is skewed to low complexity over residues 128–143 (SSSD…AAAA) and 233–266 (SSPR…SSSS). Ser234 is subject to Phosphoserine. Positions 274-287 (AMGGGGPSAAGGGT) are enriched in gly residues. Thr287 is modified (phosphothreonine). Positions 296–300 (LNQLL) match the LXXLL motif. Positions 296–307 (LNQLLTSPSSAR) are enriched in polar residues. Position 302 is a phosphoserine (Ser302). The span at 311–328 (GYPGGDYGGGPQDGGAGK) shows a compositional bias: gly residues. A phosphoserine mark is found at Ser365 and Ser384. Low complexity predominate over residues 402–427 (PYSQQQGPPSGPQQGHGYPGQPYGSQ). Residue Arg431 is modified to Asymmetric dimethylarginine. 2 stretches are compositionally biased toward polar residues: residues 438–451 (GRAQ…SYAQ) and 459–470 (QGPSAYGQQGQT). 2 stretches are compositionally biased toward low complexity: residues 471–547 (PYYN…QHPQ) and 554–596 (QPQA…YSQQ). Phosphoserine is present on Ser605. Positions 611-622 (SQASSAPSMTSS) are enriched in low complexity. Polar residues predominate over residues 629–638 (MNLSLQSRPS). The segment covering 659 to 675 (SPGVSTSGISSSQGEQS) has biased composition (low complexity). Positions 676-686 (NPAQSPFSPHT) are enriched in polar residues. Phosphoserine is present on residues Ser697, Ser699, Ser703, Ser731, Ser765, and Ser773. 2 stretches are compositionally biased toward polar residues: residues 731-748 (SGQS…SSIA) and 756-794 (RNPQ…QNSM). Low complexity predominate over residues 795–822 (GSYGPQGSQYGPQGGYPRQPNYNALPNA). In terms of domain architecture, ARID spans 1018–1109 (EPERKMWVDR…CLYAFECKIE (92 aa)). Disordered stretches follow at residues 1114-1484 (PPPD…MMGG) and 1539-1636 (RANH…PPMI). Over residues 1142–1155 (MQGPQTPQSTSSSM) the composition is skewed to low complexity. A compositionally biased stretch (pro residues) spans 1163 to 1178 (PPTPASTPHSQIPPLP). Residue Ser1185 is modified to Phosphoserine. Polar residues predominate over residues 1198–1220 (PTFQKRNSMTPNPGYQPSMNTSD). Ser1236 is modified (phosphoserine). At Arg1277 the chain carries Omega-N-methylarginine. Low complexity predominate over residues 1343–1368 (QFSTQGTPSSSPFPSQQTTMYQQQQQ). A Nuclear localization signal motif is present at residues 1369–1388 (NYKRPMDGTYGPPAKRHEGE). Low complexity predominate over residues 1395–1426 (SAGQGQPQQQQLPAAQSQPASQPQAAQPSPQQ). Polar residues-rich tracts occupy residues 1427–1436 (DVYNQYSNAY) and 1469–1478 (PGSSAQQNMP). Over residues 1555–1579 (PYGPSAPVPPMTRPPPSNYQPPPSM) the composition is skewed to pro residues. Ser1605 carries the phosphoserine modification. Lys1613 is modified (N6-acetyllysine). Positions 1710–1714 (LPGLL) match the LXXLL motif. Disordered regions lie at residues 1757–1782 (PAHT…GVGN), 1872–1904 (CPTP…PEKR), and 1917–1941 (SSTL…PFGI). Positions 1761-1782 (EEEEEEHLDPKLEEEEEEGVGN) are enriched in acidic residues. 2 positions are modified to phosphothreonine: Thr1874 and Thr1886. The segment covering 1882-1893 (TVEGTPGTTEQE) has biased composition (low complexity). Position 1903 is an N6-acetyllysine (Lys1903). Residues 1923 to 1935 (EGAKSAEATKESS) are compositionally biased toward basic and acidic residues. A phosphoserine mark is found at Ser1927 and Ser1942. 2 consecutive short sequence motifs (LXXLL) follow at residues 1965 to 1969 (LCTLL) and 2083 to 2087 (LDGLL).

Component of SWI/SNF chromatin remodeling complexes, in some of which it can be mutually exclusive with ARID1B/BAF250B. The canonical complex contains a catalytic subunit (either SMARCA4/BRG1/BAF190A or SMARCA2/BRM/BAF190B) and at least SMARCE1, ACTL6A/BAF53, SMARCC1/BAF155, SMARCC2/BAF170, and SMARCB1/SNF5/BAF47. Other subunits specific to each of the complexes may also be present permitting several possible combinations developmentally and tissue specific. Component of the BAF (SWI/SNF-A) complex, which includes at least actin (ACTB), ARID1A/BAF250A, ARID1B/BAF250B, SMARCA2/BRM, SMARCA4/BRG1/BAF190A, ACTL6A/BAF53, ACTL6B/BAF53B, SMARCE1/BAF57, SMARCC1/BAF155, SMARCC2/BAF170, SMARCB1/SNF5/INI1, and one or more SMARCD1/BAF60A, SMARCD2/BAF60B, or SMARCD3/BAF60C. In muscle cells, the BAF complex also contains DPF3. Component of neural progenitors-specific chromatin remodeling complex (npBAF complex) composed of at least, ARID1A/BAF250A or ARID1B/BAF250B, SMARCD1/BAF60A, SMARCD3/BAF60C, SMARCA2/BRM/BAF190B, SMARCA4/BRG1/BAF190A, SMARCB1/BAF47, SMARCC1/BAF155, SMARCE1/BAF57, SMARCC2/BAF170, PHF10/BAF45A, ACTL6A/BAF53A and actin. Component of neuron-specific chromatin remodeling complex (nBAF complex) composed of at least, ARID1A/BAF250A or ARID1B/BAF250B, SMARCD1/BAF60A, SMARCD3/BAF60C, SMARCA2/BRM/BAF190B, SMARCA4/BRG1/BAF190A, SMARCB1/BAF47, SMARCC1/BAF155, SMARCE1/BAF57, SMARCC2/BAF170, DPF1/BAF45B, DPF3/BAF45C, ACTL6B/BAF53B and actin. Component of a SWI/SNF-like EBAFa complex, at least composed of SMARCA4/BRG1/BAF190A, SMARCB1/BAF47/SNF5, ACTL6A/BAF53A, SMARCE1/BAF57, SMARCD1/BAF60A, SMARCC1/BAF155, SMARCC2/BAF170, BAF250A and MLLT1/ENL. Interacts through its C-terminus with SMARCA2/BRM/BAF190B and SMARCA4/BRG1/BAF190A. Interacts with SMARCC1/BAF155. Interacts with FOS (via bZIP domain and leucine-zipper region), FOSB isoform 1 and 2, FOSL1 and FOSL2. In terms of tissue distribution, widely expressed. Expressed at high levels in the testis.

The protein resides in the nucleus. Its function is as follows. Involved in transcriptional activation and repression of select genes by chromatin remodeling (alteration of DNA-nucleosome topology). Component of SWI/SNF chromatin remodeling complexes that carry out key enzymatic activities, changing chromatin structure by altering DNA-histone contacts within a nucleosome in an ATP-dependent manner. Binds DNA non-specifically. Belongs to the neural progenitors-specific chromatin remodeling complex (npBAF complex) and the neuron-specific chromatin remodeling complex (nBAF complex). During neural development a switch from a stem/progenitor to a postmitotic chromatin remodeling mechanism occurs as neurons exit the cell cycle and become committed to their adult state. The transition from proliferating neural stem/progenitor cells to postmitotic neurons requires a switch in subunit composition of the npBAF and nBAF complexes. As neural progenitors exit mitosis and differentiate into neurons, npBAF complexes which contain ACTL6A/BAF53A and PHF10/BAF45A, are exchanged for homologous alternative ACTL6B/BAF53B and DPF1/BAF45B or DPF3/BAF45C subunits in neuron-specific complexes (nBAF). The npBAF complex is essential for the self-renewal/proliferative capacity of the multipotent neural stem cells. The nBAF complex along with CREST plays a role regulating the activity of genes essential for dendrite growth. The chain is AT-rich interactive domain-containing protein 1A (Arid1a) from Mus musculus (Mouse).